The sequence spans 124 residues: Ribonuclease pancreatic A (124 aa).

The tract at residues 1–24 is disordered; the sequence is AESSAMKFERQHVDSGGSSSSNAN. Lys-7 and Arg-10 together coordinate substrate. Catalysis depends on His-12, which acts as the Proton acceptor. Disulfide bonds link Cys-26–Cys-84, Cys-40–Cys-95, Cys-58–Cys-110, and Cys-65–Cys-72. Residues 41 to 45, Lys-66, and Arg-85 each bind substrate; that span reads KPVNT. The Proton donor role is filled by His-119.

It belongs to the pancreatic ribonuclease family. As to expression, pancreas.

The protein resides in the secreted. It catalyses the reaction an [RNA] containing cytidine + H2O = an [RNA]-3'-cytidine-3'-phosphate + a 5'-hydroxy-ribonucleotide-3'-[RNA].. It carries out the reaction an [RNA] containing uridine + H2O = an [RNA]-3'-uridine-3'-phosphate + a 5'-hydroxy-ribonucleotide-3'-[RNA].. This is Ribonuclease pancreatic A from Cavia porcellus (Guinea pig).